Consider the following 1455-residue polypeptide: DNA polymerase II large subunit (1455 aa).

The segment at 1409 to 1440 (GLLENLSNGSKKTEKAEKAEKPRKKSDEKPKK) is disordered. Over residues 1419 to 1438 (KKTEKAEKAEKPRKKSDEKP) the composition is skewed to basic and acidic residues.

The protein belongs to the archaeal DNA polymerase II family. As to quaternary structure, heterodimer of a large subunit and a small subunit. This protein undergoes a protein self splicing that involves a post-translational excision of the intervening region (intein) followed by peptide ligation.

The catalysed reaction is DNA(n) + a 2'-deoxyribonucleoside 5'-triphosphate = DNA(n+1) + diphosphate. It catalyses the reaction Exonucleolytic cleavage in the 3'- to 5'-direction to yield nucleoside 5'-phosphates.. Functionally, possesses two activities: a DNA synthesis (polymerase) and an exonucleolytic activity that degrades single-stranded DNA in the 3'- to 5'-direction. Has a template-primer preference which is characteristic of a replicative DNA polymerase. The chain is DNA polymerase II large subunit (polC) from Pyrococcus abyssi (strain GE5 / Orsay).